We begin with the raw amino-acid sequence, 682 residues long: Putative L-type lectin-domain containing receptor kinase I.1 (682 aa).

Positions 1–19 (MAQRLHLLLLLFLICFVNL) are cleaved as a signal peptide. Residues 20-292 (ISFSSQQDLS…RPKKPEKTSP (273 aa)) are Extracellular-facing. The interval 27-264 (DLSFIYNGFN…YQYILGWSFS (238 aa)) is legume-lectin like. N-linked (GlcNAc...) asparagine glycosylation is found at asparagine 60, asparagine 130, asparagine 187, asparagine 210, and asparagine 231. The helical transmembrane segment at 293 to 313 (LLIVLLIILAIIVMVVVGGFY) threads the bilayer. Residues 314-682 (LYRRKKYAEV…SHTIIYGDGR (369 aa)) lie on the Cytoplasmic side of the membrane. In terms of domain architecture, Protein kinase spans 348 to 622 (FNKDGRLGRG…VQYINRHQRL (275 aa)). Residues 354–362 (LGRGGFGEV) and lysine 376 contribute to the ATP site. Aspartate 472 acts as the Proton acceptor in catalysis.

In the C-terminal section; belongs to the protein kinase superfamily. Ser/Thr protein kinase family. This sequence in the N-terminal section; belongs to the leguminous lectin family.

Its subcellular location is the cell membrane. The enzyme catalyses L-seryl-[protein] + ATP = O-phospho-L-seryl-[protein] + ADP + H(+). The catalysed reaction is L-threonyl-[protein] + ATP = O-phospho-L-threonyl-[protein] + ADP + H(+). Functionally, involved in resistance response to the pathogenic fungus Alternaria brassicicola. This chain is Putative L-type lectin-domain containing receptor kinase I.1, found in Arabidopsis thaliana (Mouse-ear cress).